Reading from the N-terminus, the 445-residue chain is Serine protease inhibitor A3F (445 aa).

Residues Asn-28, Asn-94, Asn-174, and Asn-259 are each glycosylated (N-linked (GlcNAc...) asparagine). The RCL stretch occupies residues 357 to 382 (GTEAAAGTGYQNLQCCQGVIYSMKIY).

Belongs to the serpin family.

This is Serine protease inhibitor A3F (Serpina3f) from Mus musculus (Mouse).